Consider the following 645-residue polypeptide: 1,4-alpha-glucan branching enzyme GlgB (645 aa).

Residue aspartate 309 is the Nucleophile of the active site. Catalysis depends on glutamate 352, which acts as the Proton donor. Residues 619–645 are disordered; that stretch reads VKTRKGSKKQDGSKTKVRSNVTSRGKR. The span at 636 to 645 shows a compositional bias: polar residues; it reads RSNVTSRGKR.

The protein belongs to the glycosyl hydrolase 13 family. GlgB subfamily. In terms of assembly, monomer.

It carries out the reaction Transfers a segment of a (1-&gt;4)-alpha-D-glucan chain to a primary hydroxy group in a similar glucan chain.. Its pathway is glycan biosynthesis; glycogen biosynthesis. Functionally, catalyzes the formation of the alpha-1,6-glucosidic linkages in glycogen by scission of a 1,4-alpha-linked oligosaccharide from growing alpha-1,4-glucan chains and the subsequent attachment of the oligosaccharide to the alpha-1,6 position. The sequence is that of 1,4-alpha-glucan branching enzyme GlgB from Bacillus cereus (strain AH187).